We begin with the raw amino-acid sequence, 1019 residues long: Macrophage colony-stimulating factor 1 receptor 2 (1019 aa).

An N-terminal signal peptide occupies residues 1 to 18 (MKSYCLLLSITLSCCCSA). The Extracellular portion of the chain corresponds to 19–576 (EDLPDPPSIH…LREHNSAFMS (558 aa)). Ig-like C2-type domains lie at 37 to 109 (QAEA…IHLY), 106 to 212 (IHLY…LLVA), and 224 to 312 (QNKA…LIVL). C52 and C92 are joined by a disulfide. N-linked (GlcNAc...) asparagine glycosylation is found at N96, N148, N169, N249, N342, N346, N355, N369, N379, N408, N422, N429, N433, and N514. Disulfide bonds link C139–C193 and C239–C294. 2 Ig-like C2-type domains span residues 383 to 474 (STTV…LRIY) and 487 to 567 (TLTC…VFHL). An intrachain disulfide couples C490 to C552. A helical membrane pass occupies residues 577 to 597 (ALIGAGSTAAILFLLLLVVFY). The Cytoplasmic portion of the chain corresponds to 598-1019 (KWRQKPKYEI…LSVTNIYQLS (422 aa)). Positions 601-633 (QKPKYEIRWKIIESTEGNHYTFVDPTLLPYNYK) are regulatory juxtamembrane domain. Phosphotyrosine; by autocatalysis is present on Y620. The 323-residue stretch at 641-963 (LRLGAVLGSG…MICQLIDRLL (323 aa)) folds into the Protein kinase domain. ATP-binding positions include 647-655 (LGSGAFGKV) and K674. Y756 and Y778 each carry phosphotyrosine; by autocatalysis. D827 (proton acceptor) is an active-site residue. The segment at 845-867 (DFGLARDIQNDDSYIVQGNARLP) is activation loop. Phosphotyrosine; by autocatalysis is present on residues Y858 and Y974. Residues 970 to 1001 (NHQSYSNINETKKDDFKGGKSQRRGEEEEQRR) are disordered. Basic and acidic residues predominate over residues 979 to 1001 (ETKKDDFKGGKSQRRGEEEEQRR). Y1016 bears the Phosphotyrosine; by autocatalysis mark.

It belongs to the protein kinase superfamily. Tyr protein kinase family. CSF-1/PDGF receptor subfamily. As to quaternary structure, monomer. Homodimer. Interacts with CSF1. In terms of processing, autophosphorylated in response to CSF1 binding. autophosphorylation, leading to its degradation. Ubiquitinated. Becomes rapidly polyubiquitinated after autophosphorylation, leading to its degradation.

Its subcellular location is the cell membrane. The catalysed reaction is L-tyrosyl-[protein] + ATP = O-phospho-L-tyrosyl-[protein] + ADP + H(+). Present in an inactive conformation in the absence of bound ligand. CSF1 binding leads to dimerization and activation by autophosphorylation on tyrosine residues. Its function is as follows. Tyrosine-protein kinase that acts as a cell-surface receptor for CSF1 and plays an essential role in the regulation of survival, proliferation and differentiation of hematopoietic precursor cells, especially mononuclear phagocytes, such as macrophages and monocytes. Plays an important role in innate immunity and in inflammatory processes. Plays an important role in the regulation of osteoclast proliferation and differentiation, the regulation of bone resorption, and is required for normal bone development. Promotes reorganization of the actin cytoskeleton, regulates formation of membrane ruffles, cell adhesion and cell migration. Activates several signaling pathways in response to ligand binding. This chain is Macrophage colony-stimulating factor 1 receptor 2 (csf1r2), found in Takifugu rubripes (Japanese pufferfish).